The primary structure comprises 306 residues: 2-phospho-L-lactate transferase (306 aa).

Residues Asp-54 and Arg-93 each contribute to the 7,8-didemethyl-8-hydroxy-5-deazariboflavin site.

The protein belongs to the CofD family. Homodimer. Mg(2+) serves as cofactor.

The catalysed reaction is (2S)-lactyl-2-diphospho-5'-guanosine + 7,8-didemethyl-8-hydroxy-5-deazariboflavin = oxidized coenzyme F420-0 + GMP + H(+). It participates in cofactor biosynthesis; coenzyme F420 biosynthesis. In terms of biological role, catalyzes the transfer of the 2-phospholactate moiety from (2S)-lactyl-2-diphospho-5'-guanosine to 7,8-didemethyl-8-hydroxy-5-deazariboflavin (FO) with the formation of oxidized coenzyme F420-0 and GMP. This chain is 2-phospho-L-lactate transferase, found in Methanothermobacter thermautotrophicus (strain ATCC 29096 / DSM 1053 / JCM 10044 / NBRC 100330 / Delta H) (Methanobacterium thermoautotrophicum).